The primary structure comprises 787 residues: DNA ligase (787 aa).

NAD(+) is bound by residues 32–36, 81–82, and Glu-121; these read DAEYD and SL. The N6-AMP-lysine intermediate role is filled by Lys-123. Positions 144, 181, 297, and 321 each coordinate NAD(+). Zn(2+) is bound by residues Cys-415, Cys-418, Cys-445, and Cys-451. The BRCT domain maps to 703–787; it reads VEGLPLAGQT…RLTELGVAVD (85 aa).

Belongs to the NAD-dependent DNA ligase family. LigA subfamily. Mg(2+) serves as cofactor. It depends on Mn(2+) as a cofactor.

It catalyses the reaction NAD(+) + (deoxyribonucleotide)n-3'-hydroxyl + 5'-phospho-(deoxyribonucleotide)m = (deoxyribonucleotide)n+m + AMP + beta-nicotinamide D-nucleotide.. Functionally, DNA ligase that catalyzes the formation of phosphodiester linkages between 5'-phosphoryl and 3'-hydroxyl groups in double-stranded DNA using NAD as a coenzyme and as the energy source for the reaction. It is essential for DNA replication and repair of damaged DNA. This is DNA ligase from Pseudomonas syringae pv. tomato (strain ATCC BAA-871 / DC3000).